A 287-amino-acid polypeptide reads, in one-letter code: Nucleotide-binding protein TGRD_433 (287 aa).

9-16 is a binding site for ATP; it reads GMSGAGKS. 60 to 63 is a GTP binding site; sequence DSRA.

The protein belongs to the RapZ-like family.

Functionally, displays ATPase and GTPase activities. In Endomicrobium trichonymphae, this protein is Nucleotide-binding protein TGRD_433.